Consider the following 206-residue polypeptide: Protein GrpE (206 aa).

A compositionally biased stretch (basic and acidic residues) spans 1–18 (MNNEDKKLQDEQLQKETV). Residues 1–21 (MNNEDKKLQDEQLQKETVEAA) form a disordered region.

Belongs to the GrpE family. Homodimer.

The protein resides in the cytoplasm. In terms of biological role, participates actively in the response to hyperosmotic and heat shock by preventing the aggregation of stress-denatured proteins, in association with DnaK and GrpE. It is the nucleotide exchange factor for DnaK and may function as a thermosensor. Unfolded proteins bind initially to DnaJ; upon interaction with the DnaJ-bound protein, DnaK hydrolyzes its bound ATP, resulting in the formation of a stable complex. GrpE releases ADP from DnaK; ATP binding to DnaK triggers the release of the substrate protein, thus completing the reaction cycle. Several rounds of ATP-dependent interactions between DnaJ, DnaK and GrpE are required for fully efficient folding. The polypeptide is Protein GrpE (Photobacterium profundum (strain SS9)).